The chain runs to 193 residues: Orotate phosphoribosyltransferase (193 aa).

Position 116-124 (116-124 (EDVVTTGKS)) interacts with 5-phospho-alpha-D-ribose 1-diphosphate. Residues Thr120 and Arg148 each coordinate orotate.

Belongs to the purine/pyrimidine phosphoribosyltransferase family. PyrE subfamily. Homodimer. The cofactor is Mg(2+).

The enzyme catalyses orotidine 5'-phosphate + diphosphate = orotate + 5-phospho-alpha-D-ribose 1-diphosphate. The protein operates within pyrimidine metabolism; UMP biosynthesis via de novo pathway; UMP from orotate: step 1/2. In terms of biological role, catalyzes the transfer of a ribosyl phosphate group from 5-phosphoribose 1-diphosphate to orotate, leading to the formation of orotidine monophosphate (OMP). The polypeptide is Orotate phosphoribosyltransferase (Clostridium tetani (strain Massachusetts / E88)).